The following is a 414-amino-acid chain: Esterase FrsA (414 aa).

Belongs to the FrsA family.

The enzyme catalyses a carboxylic ester + H2O = an alcohol + a carboxylate + H(+). Catalyzes the hydrolysis of esters. This chain is Esterase FrsA, found in Escherichia fergusonii (strain ATCC 35469 / DSM 13698 / CCUG 18766 / IAM 14443 / JCM 21226 / LMG 7866 / NBRC 102419 / NCTC 12128 / CDC 0568-73).